Reading from the N-terminus, the 125-residue chain is Fluoride-specific ion channel FluC (125 aa).

4 helical membrane passes run 6-26, 35-55, 66-86, and 100-120; these read VLVM…GLGI, FLFG…GLFA, LLLL…ALSI, and AMGY…AGYL. G76 and T79 together coordinate Na(+).

The protein belongs to the fluoride channel Fluc/FEX (TC 1.A.43) family.

It localises to the cell inner membrane. It carries out the reaction fluoride(in) = fluoride(out). Its activity is regulated as follows. Na(+) is not transported, but it plays an essential structural role and its presence is essential for fluoride channel function. Fluoride-specific ion channel. Important for reducing fluoride concentration in the cell, thus reducing its toxicity. The sequence is that of Fluoride-specific ion channel FluC from Gloeobacter violaceus (strain ATCC 29082 / PCC 7421).